Here is a 263-residue protein sequence, read N- to C-terminus: Phosphatidylglycerol--prolipoprotein diacylglyceryl transferase (263 aa).

Helical transmembrane passes span 15-35, 52-72, 83-103, and 112-132; these read ISIHWYAICIVSGLLLAVYLA, FILLAFPIAIVGARLYYVIFQ, IFAIWNGGIAIYGGLIAGAAV, and AIAVLDFLDIAAPGVMIAQSI. Residue Arg134 participates in a 1,2-diacyl-sn-glycero-3-phospho-(1'-sn-glycerol) binding. 3 consecutive transmembrane segments (helical) span residues 170-190, 200-220, and 227-247; these read VPTFLYESLWNLVGFSIILGL, GDVTSFYLIWYGLGRFVIEGM, and FVGLRVSQWVSISIIILGAVL.

The protein belongs to the Lgt family.

Its subcellular location is the cell membrane. It carries out the reaction L-cysteinyl-[prolipoprotein] + a 1,2-diacyl-sn-glycero-3-phospho-(1'-sn-glycerol) = an S-1,2-diacyl-sn-glyceryl-L-cysteinyl-[prolipoprotein] + sn-glycerol 1-phosphate + H(+). Its pathway is protein modification; lipoprotein biosynthesis (diacylglyceryl transfer). Its function is as follows. Catalyzes the transfer of the diacylglyceryl group from phosphatidylglycerol to the sulfhydryl group of the N-terminal cysteine of a prolipoprotein, the first step in the formation of mature lipoproteins. The protein is Phosphatidylglycerol--prolipoprotein diacylglyceryl transferase of Streptococcus thermophilus (strain ATCC BAA-491 / LMD-9).